Here is a 375-residue protein sequence, read N- to C-terminus: Succinyl-diaminopimelate desuccinylase (375 aa).

His66 serves as a coordination point for Zn(2+). Asp68 is a catalytic residue. Residue Asp99 coordinates Zn(2+). The active-site Proton acceptor is the Glu133. The Zn(2+) site is built by Glu134, Glu162, and His348.

This sequence belongs to the peptidase M20A family. DapE subfamily. Homodimer. The cofactor is Zn(2+). Co(2+) serves as cofactor.

It catalyses the reaction N-succinyl-(2S,6S)-2,6-diaminopimelate + H2O = (2S,6S)-2,6-diaminopimelate + succinate. Its pathway is amino-acid biosynthesis; L-lysine biosynthesis via DAP pathway; LL-2,6-diaminopimelate from (S)-tetrahydrodipicolinate (succinylase route): step 3/3. Catalyzes the hydrolysis of N-succinyl-L,L-diaminopimelic acid (SDAP), forming succinate and LL-2,6-diaminopimelate (DAP), an intermediate involved in the bacterial biosynthesis of lysine and meso-diaminopimelic acid, an essential component of bacterial cell walls. The protein is Succinyl-diaminopimelate desuccinylase of Salmonella agona (strain SL483).